A 110-amino-acid chain; its full sequence is UPF0060 membrane protein Pnap_4944 (110 aa).

4 helical membrane passes run 8–28, 33–53, 65–85, and 88–108; these read ILFA…WLVL, SLLL…LLTL, YGGM…GIAL, and WDLS…MQPS.

This sequence belongs to the UPF0060 family.

It localises to the cell inner membrane. The protein is UPF0060 membrane protein Pnap_4944 of Polaromonas naphthalenivorans (strain CJ2).